We begin with the raw amino-acid sequence, 600 residues long: DDB1- and CUL4-associated factor 8-like protein 1 (600 aa).

The tract at residues 1 to 122 (MSHQEGSTGG…EEEQPRMCPR (122 aa)) is disordered. 2 stretches are compositionally biased toward acidic residues: residues 74–83 (SSSEDVELES) and 96–115 (EETE…EEEE). WD repeat units follow at residues 194–233 (SHAG…PVLN), 237–278 (GHDI…YCEN), 284–324 (KHRG…PASK), 332–372 (DKKV…KKEN), 388–427 (DFPT…GAQY), 435–475 (RNND…IIQF), and 479–518 (DRGD…ATEL). Positions 562–600 (PGWRDHGAEFPDEEELDESSSTSDTSEEEGQDRVQCIPS) are disordered.

Belongs to the WD repeat DCAF8 family.

The protein is DDB1- and CUL4-associated factor 8-like protein 1 (DCAF8L1) of Homo sapiens (Human).